Reading from the N-terminus, the 138-residue chain is uncharacterized protein (138 aa).

The next 3 helical transmembrane spans lie at 17 to 37 (IVVS…TIYF), 43 to 63 (FTVV…LLVC), and 117 to 137 (FWWM…LVSL).

It localises to the cell membrane. This is an uncharacterized protein from Mycoplasma genitalium (strain ATCC 33530 / DSM 19775 / NCTC 10195 / G37) (Mycoplasmoides genitalium).